The primary structure comprises 389 residues: Chalcone synthase (389 aa).

Cysteine 164 is a catalytic residue.

This sequence belongs to the thiolase-like superfamily. Chalcone/stilbene synthases family.

It carries out the reaction (E)-4-coumaroyl-CoA + 3 malonyl-CoA + 3 H(+) = 2',4,4',6'-tetrahydroxychalcone + 3 CO2 + 4 CoA. The protein operates within secondary metabolite biosynthesis; flavonoid biosynthesis. Its function is as follows. The primary product of this enzyme is 4,2',4',6'-tetrahydroxychalcone (also termed naringenin-chalcone or chalcone) which can under specific conditions spontaneously isomerize into naringenin. The sequence is that of Chalcone synthase (CHS) from Catharanthus roseus (Madagascar periwinkle).